Consider the following 628-residue polypeptide: MFNLRNFDVIVVGAGHAGTEAAMASSRMGCKTLLLTQKISDLGALSCNPAIGGIGKSHLVKEIDALGGMMAKAIDYSGIQFRILNSSKGPAVRSTRAQADKILYHETVKKILKKQNNLLILEAEVKDLIFKNYSVVGVLTQNEINFYSRSVVLAAGTFLGGKIHIGLKSYSAGRIGDKSAIDLSVRLRELSLRVNRLKTGTPPRIDINTVNFNNLLIQNSDTPVPVFSFMGNVSHHPKQIPCYLTHTNEKTHEIIRKNLDKSPIYTGFLKGLGPRYCPSIEDKIVRFPDRKSHQVFLEPEGLSSIKVYPNGISTSLPIEVQEQIVASIKGLEKSKIIRPGYAIEYDFFDPKDLNLTLESKLIKGLFFAGQINGTTGYEEAASQGLLAGLNAALSSKNTEGWFPRRDQAYLGVLIDDLTTQGTEEPYRMFTSRAEYRLSLREDNADLRLTEIGRKLGLVNDSRWIRYNQKVLNIQTEMNRLKKNKISPISPDADILKKLYNINLIKEISMSELLKRPQIRYQDLQSLESFRTGIVDLEAIGQIENEIKYAGYIKRQSEEIERHLKNENTFLSSICDYNKIRGLSSEVVKKLNDYKPISIGQASRISGITPAAISILLIHLKKESYKHTL.

13-18 (GAGHAG) serves as a coordination point for FAD. 273–287 (GPRYCPSIEDKIVRF) lines the NAD(+) pocket.

This sequence belongs to the MnmG family. In terms of assembly, homodimer. Heterotetramer of two MnmE and two MnmG subunits. It depends on FAD as a cofactor.

It localises to the cytoplasm. Functionally, NAD-binding protein involved in the addition of a carboxymethylaminomethyl (cmnm) group at the wobble position (U34) of certain tRNAs, forming tRNA-cmnm(5)s(2)U34. This is tRNA uridine 5-carboxymethylaminomethyl modification enzyme MnmG from Buchnera aphidicola subsp. Acyrthosiphon pisum (strain Tuc7).